Reading from the N-terminus, the 208-residue chain is Mediator of RNA polymerase II transcription subunit 18 (208 aa).

S66 is modified (phosphoserine).

It belongs to the Mediator complex subunit 18 family. As to quaternary structure, component of the Mediator complex, which is composed of MED1, MED4, MED6, MED7, MED8, MED9, MED10, MED11, MED12, MED13, MED13L, MED14, MED15, MED16, MED17, MED18, MED19, MED20, MED21, MED22, MED23, MED24, MED25, MED26, MED27, MED29, MED30, MED31, CCNC, CDK8 and CDC2L6/CDK11. The MED12, MED13, CCNC and CDK8 subunits form a distinct module termed the CDK8 module. Mediator containing the CDK8 module is less active than Mediator lacking this module in supporting transcriptional activation. Individual preparations of the Mediator complex lacking one or more distinct subunits have been variously termed ARC, CRSP, DRIP, PC2, SMCC and TRAP.

The protein resides in the nucleus. Its function is as follows. Component of the Mediator complex, a coactivator involved in the regulated transcription of nearly all RNA polymerase II-dependent genes. Mediator functions as a bridge to convey information from gene-specific regulatory proteins to the basal RNA polymerase II transcription machinery. Mediator is recruited to promoters by direct interactions with regulatory proteins and serves as a scaffold for the assembly of a functional preinitiation complex with RNA polymerase II and the general transcription factors. The polypeptide is Mediator of RNA polymerase II transcription subunit 18 (MED18) (Homo sapiens (Human)).